The chain runs to 284 residues: NADH-cytochrome b5 reductase 1 (284 aa).

Residues 8-28 (PLFVFSTIAIIISTFVIFYFV) form a helical membrane-spanning segment. Residues 41-144 (DTFQKFPLIE…RGPKGFFTYT (104 aa)) enclose the FAD-binding FR-type domain. FAD contacts are provided by residues 124 to 139 (DSKK…GPKG) and 150 to 182 (SFGM…KISL).

The protein belongs to the flavoprotein pyridine nucleotide cytochrome reductase family. As to quaternary structure, monomer. Component of the 2-(3-amino-3-carboxypropyl)histidine synthase complex composed of DPH1, DPH2, DPH3 and a NADH-dependent reductase, predominantly CBR1. Requires FAD as cofactor.

It is found in the mitochondrion outer membrane. It carries out the reaction 2 Fe(III)-[cytochrome b5] + NADH = 2 Fe(II)-[cytochrome b5] + NAD(+) + H(+). The catalysed reaction is 2 Fe(3+)-[Dph3] + NADH = 2 Fe(2+)-[Dph3] + NAD(+) + H(+). Its pathway is protein modification; peptidyl-diphthamide biosynthesis. In terms of biological role, NADH-dependent reductase for DPH3 and cytochrome b5. Required for the first step of diphthamide biosynthesis, a post-translational modification of histidine which occurs in elongation factor 2. DPH1 and DPH2 transfer a 3-amino-3-carboxypropyl (ACP) group from S-adenosyl-L-methionine (SAM) to a histidine residue, the reaction is assisted by a reduction system comprising DPH3 and a NADH-dependent reductase, predominantly CBR1. By reducing DPH3, also involved in the formation of the tRNA wobble base modification mcm5s 2U (5-methoxycarbonylmethyl-2-thiouridine), mediated by the elongator complex. The cytochrome b5/NADH cytochrome b5 reductase electron transfer system supports the catalytic activity of several sterol biosynthetic enzymes. In Scheffersomyces stipitis (strain ATCC 58785 / CBS 6054 / NBRC 10063 / NRRL Y-11545) (Yeast), this protein is NADH-cytochrome b5 reductase 1 (CBR1).